The chain runs to 199 residues: TATA-box-binding protein (199 aa).

2 repeat units span residues 10 to 86 (IENI…VKLL) and 101 to 177 (VQNI…YNQL).

It belongs to the TBP family.

In terms of biological role, general factor that plays a role in the activation of archaeal genes transcribed by RNA polymerase. Binds specifically to the TATA box promoter element which lies close to the position of transcription initiation. The polypeptide is TATA-box-binding protein (Pyrobaculum islandicum (strain DSM 4184 / JCM 9189 / GEO3)).